The chain runs to 563 residues: Rhodopsin kinase GRK1 (563 aa).

An interaction with RCVRN region spans residues 1–15; sequence MDFGSLETVVANSAF. The interval 1 to 189 is N-terminal; it reads MDFGSLETVV…LEAQPMGEDW (189 aa). The residue at position 5 (serine 5) is a Phosphoserine. Position 8 is a phosphothreonine (threonine 8). Serine 21 carries the post-translational modification Phosphoserine; by PKA and autocatalysis. The 118-residue stretch at 58–175 folds into the RGS domain; the sequence is FESVCLEQPI…LGSLYFLRFL (118 aa). The Protein kinase domain maps to 190-455; it reads FLDFRVLGKG…CDKLRAHPLF (266 aa). ATP contacts are provided by residues 196–204 and lysine 219; that span reads LGKGGFGEV. Aspartate 317 serves as the catalytic Proton acceptor. The AGC-kinase C-terminal domain maps to 456–521; sequence KDLNWRQLEA…GNCPIPWQEE (66 aa). The tract at residues 456-563 is C-terminal; sequence KDLNWRQLEA…SSKSGMCLVS (108 aa). Position 491 is a phosphoserine; by autocatalysis (serine 491). Threonine 492 is subject to Phosphothreonine; by autocatalysis. The interval 539–563 is disordered; that stretch reads QMPDDMKGISGGSSSSSKSGMCLVS. The span at 550 to 563 shows a compositional bias: low complexity; it reads GSSSSSKSGMCLVS. Cysteine 560 carries the cysteine methyl ester modification. A lipid anchor (S-farnesyl cysteine) is attached at cysteine 560. The propeptide at 561 to 563 is removed in mature form; that stretch reads LVS.

This sequence belongs to the protein kinase superfamily. AGC Ser/Thr protein kinase family. GPRK subfamily. Interacts (via N-terminus) with RCVRN (via C-terminus); the interaction is Ca(2+)-dependent. Interacts (when prenylated) with PDE6D; this promotes release from membranes. May form a complex composed of RHO, GRK1 and RCVRN in a Ca(2+)-dependent manner; RCVRN prevents the interaction between GRK1 and RHO. In terms of processing, autophosphorylated, Ser-21 is a minor site of autophosphorylation compared to Ser-491 and Thr-492. Phosphorylation at Ser-21 is regulated by light and activated by cAMP. Farnesylation is required for full activity. Retinal-specific. Expressed in rods and cones cells.

Its subcellular location is the membrane. The protein localises to the cell projection. It localises to the cilium. The protein resides in the photoreceptor outer segment. The enzyme catalyses L-threonyl-[rhodopsin] + ATP = O-phospho-L-threonyl-[rhodopsin] + ADP + H(+). It carries out the reaction L-seryl-[rhodopsin] + ATP = O-phospho-L-seryl-[rhodopsin] + ADP + H(+). With respect to regulation, inhibited by RCVRN, which prevents the interaction between GRK1 and RHO. Inhibition is calcium-dependent. Inhibited by phosphorylation of Ser-21. Functionally, retina-specific kinase involved in the signal turnoff via phosphorylation of rhodopsin (RHO), the G protein- coupled receptor that initiates the phototransduction cascade. This rapid desensitization is essential for scotopic vision and permits rapid adaptation to changes in illumination. May play a role in the maintenance of the outer nuclear layer in the retina. The polypeptide is Rhodopsin kinase GRK1 (Homo sapiens (Human)).